The sequence spans 447 residues: Serine--tRNA ligase (447 aa).

Residue 245 to 247 (TAE) coordinates L-serine. ATP contacts are provided by residues 276 to 278 (RKE) and V292. An L-serine-binding site is contributed by E299. 363 to 366 (ELAS) serves as a coordination point for ATP. T398 is an L-serine binding site.

The protein belongs to the class-II aminoacyl-tRNA synthetase family. Type-1 seryl-tRNA synthetase subfamily. As to quaternary structure, homodimer. The tRNA molecule binds across the dimer.

The protein localises to the cytoplasm. It carries out the reaction tRNA(Ser) + L-serine + ATP = L-seryl-tRNA(Ser) + AMP + diphosphate + H(+). The enzyme catalyses tRNA(Sec) + L-serine + ATP = L-seryl-tRNA(Sec) + AMP + diphosphate + H(+). It functions in the pathway aminoacyl-tRNA biosynthesis; selenocysteinyl-tRNA(Sec) biosynthesis; L-seryl-tRNA(Sec) from L-serine and tRNA(Sec): step 1/1. In terms of biological role, catalyzes the attachment of serine to tRNA(Ser). Is also able to aminoacylate tRNA(Sec) with serine, to form the misacylated tRNA L-seryl-tRNA(Sec), which will be further converted into selenocysteinyl-tRNA(Sec). The sequence is that of Serine--tRNA ligase from Pyrobaculum neutrophilum (strain DSM 2338 / JCM 9278 / NBRC 100436 / V24Sta) (Thermoproteus neutrophilus).